The following is a 439-amino-acid chain: MYSSPLCLTQDEFHPFIEALLPHVRAFAYTWFNLQARKRKYFKKHEKRMSKDEERAVKDELLGEKAEVKQKWASRLLAKLRKDIRPECREDFVLAVTGKKAPGCVLSNPDQKGKMRRIDCLRQADKVWRLDLVMVILFKGIPLESTDGERLVKAAACAHPVLCVQPHHIGVAVKELDLYLAYFVRERDAEQSSSPRTGVGSDQEDSKPITLDTTDFQESFVTSGVFSVTELIQVSRTPVVTGTGPNFSLGELQGHLAYDLNPASAGMRRTLPSTSSSGSKRHKSGSMEEDVDTSPGGDYYTSPNSPTSSSRNWTEDIEGGISSPVKKTEMDKSPFNSPSPQDSPRLSSFTQHHRPVIAVHSGIARSPHPTSALHFPATPILPQTASTYFPHTAIRYPPHLNPQDPLKDLVSLACDPATQQPGPPALRPTRPLQTVPLWD.

Met1 carries the post-translational modification N-acetylmethionine. The segment at residues 1–195 is a DNA-binding region (CTF/NF-I); it reads MYSSPLCLTQ…ERDAEQSSSP (195 aa). Ser194 and Ser294 each carry phosphoserine. The interval 265 to 348 is disordered; it reads AGMRRTLPST…SPQDSPRLSS (84 aa). Residues 299–312 show a composition bias toward low complexity; it reads YYTSPNSPTSSSRN. Position 300 is a phosphotyrosine (Tyr300). Residues Ser302, Ser305, Ser323, Ser333, Ser337, Ser339, and Ser343 each carry the phosphoserine modification. The segment covering 334-348 has biased composition (polar residues); the sequence is PFNSPSPQDSPRLSS. Position 365 is an asymmetric dimethylarginine; alternate (Arg365). Omega-N-methylarginine; alternate is present on Arg365. Arg395 carries the post-translational modification Asymmetric dimethylarginine. The short motif at 404–412 is the 9aaTAD element; it reads DPLKDLVSL. Residues 415–439 form a disordered region; sequence DPATQQPGPPALRPTRPLQTVPLWD.

It belongs to the CTF/NF-I family. Binds DNA as a homodimer. In terms of tissue distribution, highest levels in skeletal muscle. Lower levels in heart, liver, kidney, lung and brain. Very low levels in testis and spleen.

The protein resides in the nucleus. Its function is as follows. Recognizes and binds the palindromic sequence 5'-TTGGCNNNNNGCCAA-3' present in viral and cellular promoters and in the origin of replication of adenovirus type 2. These proteins are individually capable of activating transcription and replication. The sequence is that of Nuclear factor 1 C-type (Nfic) from Mus musculus (Mouse).